A 418-amino-acid polypeptide reads, in one-letter code: Serine hydroxymethyltransferase (418 aa).

(6S)-5,6,7,8-tetrahydrofolate-binding positions include Leu121 and 125–127 (GHL). Position 230 is an N6-(pyridoxal phosphate)lysine (Lys230). (6S)-5,6,7,8-tetrahydrofolate-binding positions include Glu246 and 355–357 (SPF).

This sequence belongs to the SHMT family. Homodimer. Requires pyridoxal 5'-phosphate as cofactor.

The protein resides in the cytoplasm. It carries out the reaction (6R)-5,10-methylene-5,6,7,8-tetrahydrofolate + glycine + H2O = (6S)-5,6,7,8-tetrahydrofolate + L-serine. It participates in one-carbon metabolism; tetrahydrofolate interconversion. Its pathway is amino-acid biosynthesis; glycine biosynthesis; glycine from L-serine: step 1/1. In terms of biological role, catalyzes the reversible interconversion of serine and glycine with tetrahydrofolate (THF) serving as the one-carbon carrier. This reaction serves as the major source of one-carbon groups required for the biosynthesis of purines, thymidylate, methionine, and other important biomolecules. Also exhibits THF-independent aldolase activity toward beta-hydroxyamino acids, producing glycine and aldehydes, via a retro-aldol mechanism. The sequence is that of Serine hydroxymethyltransferase from Streptococcus pneumoniae serotype 19F (strain G54).